The chain runs to 344 residues: Proline-rich transmembrane protein 2 (344 aa).

Disordered regions lie at residues 1–220 and 233–265; these read MAAS…GAPP and GRAH…GGEG. The Cytoplasmic segment spans residues 1–272; sequence MAASSSEVSE…GEGTQKPRDY (272 aa). At Ser-28 the chain carries Phosphoserine. Residues 69–82 are compositionally biased toward low complexity; it reads PETTETPVETPETV. 2 positions are modified to phosphothreonine: Thr-74 and Thr-78. Positions 124–143 are enriched in polar residues; it reads AEQQSAAPPEPTSEQALQLN. Positions 151–162 are enriched in pro residues; sequence TSQPPPKPPLQA. Residues 168–178 are compositionally biased toward polar residues; the sequence is ENPTTEVLTES. Residues 201–211 show a composition bias toward pro residues; the sequence is APQPHSPPSTK. Phosphoserine is present on Ser-242. Arg-244 bears the Omega-N-methylarginine mark. Ser-252 and Ser-253 each carry phosphoserine. The segment at residues 273–293 is an intramembrane region (helical); sequence IILAILSCFCPMWPVNIVAFA. At 294–321 the chain is on the cytoplasmic side; it reads YAVMSRNSLQQGDVDGAQRLGRVAKLLS. A helical membrane pass occupies residues 322-342; that stretch reads IVALVGGVLIIIASCVINLGV. The Extracellular segment spans residues 343–344; sequence YK.

Belongs to the CD225/Dispanin family. Component of the outer core of AMPAR complex. AMPAR complex consists of an inner core made of 4 pore-forming GluA/GRIA proteins (GRIA1, GRIA2, GRIA3 and GRIA4) and 4 major auxiliary subunits arranged in a twofold symmetry. One of the two pairs of distinct binding sites is occupied either by CNIH2, CNIH3 or CACNG2, CACNG3. The other harbors CACNG2, CACNG3, CACNG4, CACNG8 or GSG1L. This inner core of AMPAR complex is complemented by outer core constituents binding directly to the GluA/GRIA proteins at sites distinct from the interaction sites of the inner core constituents. Outer core constituents include at least PRRT1, PRRT2, CKAMP44/SHISA9, FRRS1L and NRN1. The proteins of the inner and outer core serve as a platform for other, more peripherally associated AMPAR constituents. Alone or in combination, these auxiliary subunits control the gating and pharmacology of the AMPAR complex and profoundly impact their biogenesis and protein processing. Interacts with intersectin 1/ITSN1. Interacts with SNARE complex components, including SNAP25, STX1A, SYT1 and SYT2; this interaction may inhibit SNARE complex formation. In terms of tissue distribution, neuron-specific expression throughout the brain, including hippocampus (at protein level).

It is found in the cell membrane. Its subcellular location is the presynaptic cell membrane. It localises to the synapse. The protein resides in the cell projection. The protein localises to the axon. It is found in the cytoplasmic vesicle. Its subcellular location is the secretory vesicle. It localises to the synaptic vesicle membrane. The protein resides in the postsynaptic density membrane. The protein localises to the dendritic spine. Its function is as follows. As a component of the outer core of AMPAR complex, may be involved in synaptic transmission in the central nervous system. In hippocampal neurons, in presynaptic terminals, plays an important role in the final steps of neurotransmitter release, possibly by regulating Ca(2+)-sensing. In the cerebellum, may inhibit SNARE complex formation and down-regulate short-term facilitation. In Rattus norvegicus (Rat), this protein is Proline-rich transmembrane protein 2 (Prrt2).